A 441-amino-acid chain; its full sequence is 4-hydroxy-3-methylbut-2-en-1-yl diphosphate synthase (flavodoxin) (441 aa).

The [4Fe-4S] cluster site is built by Cys320, Cys323, Cys366, and Glu373.

It belongs to the IspG family. The cofactor is [4Fe-4S] cluster.

It carries out the reaction (2E)-4-hydroxy-3-methylbut-2-enyl diphosphate + oxidized [flavodoxin] + H2O + 2 H(+) = 2-C-methyl-D-erythritol 2,4-cyclic diphosphate + reduced [flavodoxin]. Its pathway is isoprenoid biosynthesis; isopentenyl diphosphate biosynthesis via DXP pathway; isopentenyl diphosphate from 1-deoxy-D-xylulose 5-phosphate: step 5/6. In terms of biological role, converts 2C-methyl-D-erythritol 2,4-cyclodiphosphate (ME-2,4cPP) into 1-hydroxy-2-methyl-2-(E)-butenyl 4-diphosphate. This is 4-hydroxy-3-methylbut-2-en-1-yl diphosphate synthase (flavodoxin) from Rhodopseudomonas palustris (strain ATCC BAA-98 / CGA009).